A 517-amino-acid polypeptide reads, in one-letter code: ATP synthase subunit alpha 1 (517 aa).

174-181 (GDRQTGKT) is an ATP binding site.

This sequence belongs to the ATPase alpha/beta chains family. As to quaternary structure, F-type ATPases have 2 components, CF(1) - the catalytic core - and CF(0) - the membrane proton channel. CF(1) has five subunits: alpha(3), beta(3), gamma(1), delta(1), epsilon(1). CF(0) has three main subunits: a(1), b(2) and c(9-12). The alpha and beta chains form an alternating ring which encloses part of the gamma chain. CF(1) is attached to CF(0) by a central stalk formed by the gamma and epsilon chains, while a peripheral stalk is formed by the delta and b chains.

It localises to the cell inner membrane. The catalysed reaction is ATP + H2O + 4 H(+)(in) = ADP + phosphate + 5 H(+)(out). Its function is as follows. Produces ATP from ADP in the presence of a proton gradient across the membrane. The alpha chain is a regulatory subunit. The chain is ATP synthase subunit alpha 1 from Polaromonas naphthalenivorans (strain CJ2).